The following is a 545-amino-acid chain: Light-independent protochlorophyllide reductase subunit N (545 aa).

Positions 102, 127, and 187 each coordinate [4Fe-4S] cluster.

The protein belongs to the BchN/ChlN family. Protochlorophyllide reductase is composed of three subunits; ChlL, ChlN and ChlB. Forms a heterotetramer of two ChlB and two ChlN subunits. [4Fe-4S] cluster serves as cofactor.

The protein resides in the plastid. It localises to the chloroplast. The catalysed reaction is chlorophyllide a + oxidized 2[4Fe-4S]-[ferredoxin] + 2 ADP + 2 phosphate = protochlorophyllide a + reduced 2[4Fe-4S]-[ferredoxin] + 2 ATP + 2 H2O. The protein operates within porphyrin-containing compound metabolism; chlorophyll biosynthesis (light-independent). Its function is as follows. Component of the dark-operative protochlorophyllide reductase (DPOR) that uses Mg-ATP and reduced ferredoxin to reduce ring D of protochlorophyllide (Pchlide) to form chlorophyllide a (Chlide). This reaction is light-independent. The NB-protein (ChlN-ChlB) is the catalytic component of the complex. The protein is Light-independent protochlorophyllide reductase subunit N of Chlamydomonas reinhardtii (Chlamydomonas smithii).